The chain runs to 1332 residues: Xanthine dehydrogenase/oxidase (1332 aa).

A 2Fe-2S ferredoxin-type domain is found at 4-91; sequence DELVFFVNGK…HVAVTTVEGI (88 aa). [2Fe-2S] cluster is bound by residues cysteine 43, cysteine 48, cysteine 51, cysteine 73, cysteine 113, cysteine 116, cysteine 148, and cysteine 150. The region spanning 229–414 is the FAD-binding PCMH-type domain; the sequence is FEGERVTWIQ…LSIEIPYSRE (186 aa). FAD is bound by residues 257–264, phenylalanine 337, 347–351, aspartate 360, leucine 404, and lysine 422; these read LVVGNTEI and SLGGN. An intrachain disulfide couples cysteine 535 to cysteine 992. Mo-molybdopterin is bound by residues glutamine 767 and phenylalanine 798. Substrate is bound by residues glutamate 802 and arginine 880. Mo-molybdopterin is bound at residue arginine 912. Positions 914 and 1010 each coordinate substrate. Alanine 1079 serves as a coordination point for Mo-molybdopterin. Glutamate 1261 acts as the Proton acceptor in catalysis.

It belongs to the xanthine dehydrogenase family. In terms of assembly, homodimer. Interacts with BTN1A1. [2Fe-2S] cluster is required as a cofactor. It depends on FAD as a cofactor. The cofactor is Mo-molybdopterin. In terms of processing, subject to partial proteolysis; this alters the enzyme from the dehydrogenase form (D) to the oxidase form (O). Post-translationally, contains sulfhydryl groups that are easily oxidized (in vitro); this alters the enzyme from the dehydrogenase form (D) to the oxidase form (O). As to expression, detected in milk (at protein level).

The protein resides in the cytoplasm. Its subcellular location is the peroxisome. It localises to the secreted. The catalysed reaction is xanthine + NAD(+) + H2O = urate + NADH + H(+). It catalyses the reaction hypoxanthine + NAD(+) + H2O = xanthine + NADH + H(+). It carries out the reaction xanthine + O2 + H2O = urate + H2O2. With respect to regulation, can be converted from the dehydrogenase form (D) to the oxidase form (O) irreversibly by proteolysis or reversibly through the oxidation of sulfhydryl groups. Key enzyme in purine degradation. Catalyzes the oxidation of hypoxanthine to xanthine. Catalyzes the oxidation of xanthine to uric acid. Contributes to the generation of reactive oxygen species. The chain is Xanthine dehydrogenase/oxidase (XDH) from Bos taurus (Bovine).